A 334-amino-acid chain; its full sequence is Phosphatidylglycerol--prolipoprotein diacylglyceryl transferase (334 aa).

Helical transmembrane passes span 22–42, 54–74, 105–125, and 131–151; these read FLPFRIQTYALIILTGIVVAA, AEPGVVLDVLLWAVPLGIIGA, IWEGGNAIFGALIGGAVGVGI, and GLRFWTFADALAPALLLAQAI. Arg153 serves as a coordination point for a 1,2-diacyl-sn-glycero-3-phospho-(1'-sn-glycerol). 2 helical membrane-spanning segments follow: residues 191-211 and 251-271; these read LFQPLFLYEIVWNVIGVFVIL and FLGIPSNVWAAFAAVVLGAII. Residues 296-334 form a disordered region; sequence PQAEVESGETDPEEILHADDDEERTGTHKPQATSLSGSN. The segment covering 301 to 318 has biased composition (acidic residues); it reads ESGETDPEEILHADDDEE. Positions 323 to 334 are enriched in polar residues; it reads HKPQATSLSGSN.

Belongs to the Lgt family.

Its subcellular location is the cell membrane. The catalysed reaction is L-cysteinyl-[prolipoprotein] + a 1,2-diacyl-sn-glycero-3-phospho-(1'-sn-glycerol) = an S-1,2-diacyl-sn-glyceryl-L-cysteinyl-[prolipoprotein] + sn-glycerol 1-phosphate + H(+). Its pathway is protein modification; lipoprotein biosynthesis (diacylglyceryl transfer). Functionally, catalyzes the transfer of the diacylglyceryl group from phosphatidylglycerol to the sulfhydryl group of the N-terminal cysteine of a prolipoprotein, the first step in the formation of mature lipoproteins. This chain is Phosphatidylglycerol--prolipoprotein diacylglyceryl transferase, found in Leifsonia xyli subsp. xyli (strain CTCB07).